A 519-amino-acid polypeptide reads, in one-letter code: Developmental regulatory protein wetA (519 aa).

6 disordered regions span residues 105–165 (PSRP…MRSS), 270–294 (PSSA…WQSD), 301–320 (LSFT…PMPS), 325–344 (QQAS…NVGN), 389–452 (SQIH…GSNK), and 470–495 (LTGV…RRRK). The segment covering 108 to 118 (PTATHALSTSP) has biased composition (low complexity). Residues 155–165 (QSFSPSLMRSS) show a composition bias toward polar residues. Polar residues predominate over residues 301 to 315 (LSFTPDLQGQDSQWW). Residues 389–400 (SQIHNVSRSPSL) are compositionally biased toward polar residues. Residues 419–428 (PTHRRTHSRK) show a composition bias toward basic residues. Low complexity predominate over residues 435 to 452 (NAPKPAKASGSSSRGSNK).

The protein belongs to the wetA family.

In terms of biological role, brlA, abaA and wetA are pivotal regulators of conidiophore development and conidium maturation. They act individually and together to regulate their own expression and that of numerous other sporulation-specific genes. This Penicillium camembertii protein is Developmental regulatory protein wetA.